Consider the following 224-residue polypeptide: MSVVALVPAAGRGVRLGAGVPKALVPVAGESLLSRAVRGLHDSGRVRHVVVAAPADEVPAVEAELASLRSFVHVVPGGAERTDSVRLALAEAERVVPDARVVLVHDAARAFTPPSVVRDVVRAVEEGAPAVVPVLPVADTIKQVDEAGDVETTVDRSRLRTVQTPQGFAIDVLRQAYAAAGDIATDDAGLVERIGGKVSTVPGHPHALKITTAFDLAIAEAVLA.

The protein belongs to the IspD/TarI cytidylyltransferase family. IspD subfamily.

It catalyses the reaction 2-C-methyl-D-erythritol 4-phosphate + CTP + H(+) = 4-CDP-2-C-methyl-D-erythritol + diphosphate. The protein operates within isoprenoid biosynthesis; isopentenyl diphosphate biosynthesis via DXP pathway; isopentenyl diphosphate from 1-deoxy-D-xylulose 5-phosphate: step 2/6. Catalyzes the formation of 4-diphosphocytidyl-2-C-methyl-D-erythritol from CTP and 2-C-methyl-D-erythritol 4-phosphate (MEP). The sequence is that of 2-C-methyl-D-erythritol 4-phosphate cytidylyltransferase from Saccharopolyspora erythraea (strain ATCC 11635 / DSM 40517 / JCM 4748 / NBRC 13426 / NCIMB 8594 / NRRL 2338).